Here is a 435-residue protein sequence, read N- to C-terminus: Proline--tRNA ligase (435 aa).

It belongs to the class-II aminoacyl-tRNA synthetase family. ProS type 2 subfamily. In terms of assembly, homodimer.

The protein localises to the cytoplasm. It carries out the reaction tRNA(Pro) + L-proline + ATP = L-prolyl-tRNA(Pro) + AMP + diphosphate. Catalyzes the attachment of proline to tRNA(Pro) in a two-step reaction: proline is first activated by ATP to form Pro-AMP and then transferred to the acceptor end of tRNA(Pro). The protein is Proline--tRNA ligase (proS) of Sulfurimonas denitrificans (strain ATCC 33889 / DSM 1251) (Thiomicrospira denitrificans (strain ATCC 33889 / DSM 1251)).